The following is a 339-amino-acid chain: Phosphate acyltransferase (339 aa).

It belongs to the PlsX family. As to quaternary structure, homodimer. Probably interacts with PlsY.

The protein resides in the cytoplasm. The catalysed reaction is a fatty acyl-[ACP] + phosphate = an acyl phosphate + holo-[ACP]. Its pathway is lipid metabolism; phospholipid metabolism. Catalyzes the reversible formation of acyl-phosphate (acyl-PO(4)) from acyl-[acyl-carrier-protein] (acyl-ACP). This enzyme utilizes acyl-ACP as fatty acyl donor, but not acyl-CoA. This Brachyspira hyodysenteriae (strain ATCC 49526 / WA1) protein is Phosphate acyltransferase.